The chain runs to 533 residues: ATP synthase F(1) complex catalytic subunit beta, mitochondrial (533 aa).

The transit peptide at 1-53 (MLGLAGRCSAAAASAARPALRRAAGPSHGFLPLLLSRGAGPAAAVGARRDHAA) directs the protein to the mitochondrion. Residues Gly-214, Val-215, Gly-216, Lys-217, Thr-218, and Val-219 each coordinate ADP. Position 214 (Gly-214) interacts with ATP. Positions 214, 215, 216, 217, and 218 each coordinate phosphate. The ATP site is built by Gly-216, Lys-217, Thr-218, and Val-219. Thr-218 contributes to the Mg(2+) binding site. Glu-243 is a Mg(2+) binding site. Position 244 (Arg-244) interacts with ATP.

As to quaternary structure, homotrimer. Component of the ATP synthase complex composed at least of ATP5F1A/subunit alpha, ATP5F1B/subunit beta, ATP5MC1/subunit c (homooctomer), MT-ATP6/subunit a, MT-ATP8/subunit 8, ATP5ME/subunit e, ATP5MF/subunit f, ATP5MG/subunit g, ATP5MK/subunit k, ATP5MJ/subunit j, ATP5F1C/subunit gamma, ATP5F1D/subunit delta, ATP5F1E/subunit epsilon, ATP5PF/subunit F6, ATP5PB/subunit b, ATP5PD/subunit d, ATP5PO/subunit OSCP. ATP synthase complex consists of a soluble F(1) head domain (subunits alpha(3) and beta(3)) - the catalytic core - and a membrane F(0) domain - the membrane proton channel (subunits c, a, 8, e, f, g, k and j). These two domains are linked by a central stalk (subunits gamma, delta, and epsilon) rotating inside the F1 region and a stationary peripheral stalk (subunits F6, b, d, and OSCP).

It localises to the mitochondrion inner membrane. The catalysed reaction is ATP + H2O + 4 H(+)(in) = ADP + phosphate + 5 H(+)(out). Its function is as follows. Catalytic subunit beta, of the mitochondrial membrane ATP synthase complex (F(1)F(0) ATP synthase or Complex V) that produces ATP from ADP in the presence of a proton gradient across the membrane which is generated by electron transport complexes of the respiratory chain. ATP synthase complex consist of a soluble F(1) head domain - the catalytic core - and a membrane F(1) domain - the membrane proton channel. These two domains are linked by a central stalk rotating inside the F(1) region and a stationary peripheral stalk. During catalysis, ATP synthesis in the catalytic domain of F(1) is coupled via a rotary mechanism of the central stalk subunits to proton translocation. In vivo, can only synthesize ATP although its ATP hydrolase activity can be activated artificially in vitro. With the subunit alpha (ATP5F1A), forms the catalytic core in the F(1) domain. This Gallus gallus (Chicken) protein is ATP synthase F(1) complex catalytic subunit beta, mitochondrial.